The following is an 88-amino-acid chain: Phosphocarrier protein HPr (88 aa).

One can recognise an HPr domain in the interval 1–88 (MEQQSYTIID…DVLSKEGLTE (88 aa)). His-15 functions as the Pros-phosphohistidine intermediate in the catalytic mechanism. Ser-46 is subject to Phosphoserine; by HPrK/P.

It belongs to the HPr family.

The protein resides in the cytoplasm. Its activity is regulated as follows. Phosphorylation on Ser-46 inhibits the phosphoryl transfer from enzyme I to HPr. In terms of biological role, general (non sugar-specific) component of the phosphoenolpyruvate-dependent sugar phosphotransferase system (sugar PTS). This major carbohydrate active-transport system catalyzes the phosphorylation of incoming sugar substrates concomitantly with their translocation across the cell membrane. The phosphoryl group from phosphoenolpyruvate (PEP) is transferred to the phosphoryl carrier protein HPr by enzyme I. Phospho-HPr then transfers it to the PTS EIIA domain. Functionally, P-Ser-HPr interacts with the catabolite control protein A (CcpA), forming a complex that binds to DNA at the catabolite response elements cre, operator sites preceding a large number of catabolite-regulated genes. Thus, P-Ser-HPr is a corepressor in carbon catabolite repression (CCR), a mechanism that allows bacteria to coordinate and optimize the utilization of available carbon sources. P-Ser-HPr also plays a role in inducer exclusion, in which it probably interacts with several non-PTS permeases and inhibits their transport activity. The chain is Phosphocarrier protein HPr (ptsH) from Staphylococcus carnosus.